Consider the following 100-residue polypeptide: NADH-quinone oxidoreductase subunit K (100 aa).

Helical transmembrane passes span I2–I22, I29–I49, and L63–W83.

Belongs to the complex I subunit 4L family. As to quaternary structure, NDH-1 is composed of 14 different subunits. Subunits NuoA, H, J, K, L, M, N constitute the membrane sector of the complex.

Its subcellular location is the cell inner membrane. The enzyme catalyses a quinone + NADH + 5 H(+)(in) = a quinol + NAD(+) + 4 H(+)(out). In terms of biological role, NDH-1 shuttles electrons from NADH, via FMN and iron-sulfur (Fe-S) centers, to quinones in the respiratory chain. The immediate electron acceptor for the enzyme in this species is believed to be ubiquinone. Couples the redox reaction to proton translocation (for every two electrons transferred, four hydrogen ions are translocated across the cytoplasmic membrane), and thus conserves the redox energy in a proton gradient. The polypeptide is NADH-quinone oxidoreductase subunit K (Campylobacter curvus (strain 525.92)).